We begin with the raw amino-acid sequence, 205 residues long: Thymidylate kinase (205 aa).

Residue 10–17 participates in ATP binding; it reads GIDGAGKS.

Belongs to the thymidylate kinase family.

The catalysed reaction is dTMP + ATP = dTDP + ADP. In terms of biological role, phosphorylation of dTMP to form dTDP in both de novo and salvage pathways of dTTP synthesis. The polypeptide is Thymidylate kinase (Ralstonia nicotianae (strain ATCC BAA-1114 / GMI1000) (Ralstonia solanacearum)).